The chain runs to 1955 residues: MKSAASSEDVVRVTEDLSECRNRLDAGIEENRRNRQVIQDINDQLQRFRQRANAESIESFNLTPSPDVTLSSLAHPGLTHLHNQTNISMPSLTIDIPLNSNAMISSSRTPNYAINGLRNRHKSLVGHRYRSTSPIGDYGRHRSSPRVLAHYNLDGADIGVGEENLDELFAKLKEELFKNNTLEEVNEMLREENDAALAANEHLRVDATNLSRQLQQLQQQQHTESMRFRSENTRYRNQTETQHRKLISLWKEFTAVKRQLHELRTTTANDLDRQLTEFTRCATLMRKAIRHAEQKNLDQKEQMKREKDDVLDETLRQLNSVTENYMKSEEKANERQRDLKRKEDECRKLREQNDELSDILEQLSKMAHEMAGGRGRNETPMDVARKMRKLLTTKNGEIDESREAAKQAEKERDRAKKDLEKEEKRRKDDREAERKRSSVYSQREHDLKKLDDELRKASEKIRNLEEQRESQEKLTISVQNSLNEAHRQHKQFIEELMIRHREELKEREDSHEEALRSKDTEERSRFEKERSEREKIRRESDELRETQRSLKGDVAAMKTDLDDKTLRLDMLETERDELKKKLETEREQADQRDLEIAECRAKLDEMAEKEAELRKELAEFQAIITAMEGEGKLNQEQFLESKNELNTLTDQIESLNSEVENKNEEIRNLMATLQEKEVHIQNVRTSSHQLTATYEEANGEIDILKAELTRLHEQVNERTRQISEANEKYDDAARKNDALLEDVATWQEKYEQLKMELEEMNRRGQEKEREEADLRALLDDLRGNFDKLTNELKQKGVTVDSLNEEISSLKEQLNKSEKERKEELLRMEELEQKNEAEMKEEYEVKLQLAEKDRQGVENFGKECEARMNELTKIHEMLMEEHDQLKVDHLHTEEEVERLKEKMRKELEKLNEQNDGDRAEWSNERNRLESSKNEAVTELQERVQKLEDVVKEKEDKEIALRRDLEDSHEKSRDLDDKLRKMELTDEEKEEDRKKEQKTLNEERMKLMEQKEEAMLVATKHATTIDQQTRRISVLEGDVEKLTAGIAERESSINALESNTMELISKLETTEAELEKLKDELAVMLKQNSELKNGKEGLSEKWNEERKKIQDLADQLREANKVVHNMRMKNVNLEEKKNELDQNVTDLTNKVRQLEIQLMDKAAKNEVSGDLLRKMEHDAQSMLKQAQNEQFRLTDLEKVRKALQDENQRLVNDLATVKAAFEVKRETSKSAISDILDKYRSAEEKANKGELDNQRLRSDLATVTLKLERQELKAKDSDNRLRDSQKRFEEVQSKLANLQKSAVESLQNPMSSNSRQNRSIYVDIPRAASSIGLNENSDEVPLRSSPSVRFADSSQNMQRAVDSMDVSSSVGVTLRFLKERIEQLEADNADLSDALEKAKDELRQRNEKLADRQMVIERVERQLVHITEERNTIENRMTSQRQMYLTNEESSRSREHEIRSMKARISTLELHLREKESKLAHLRKEIEVLHGQLHDALESKEKATGLVGVQDSKHRDLEEQLDRANRERELAIGKQRRTLAENENLFRKLEQLEKEREQLMREITDERRLNERNRTSLEELRVSERTWKSAMTTAKKPAEEQERAVQEQRRWEESNHEMTNRNTALTKECDRLRVEMRDQLNRMNGINLRSVDFERKNEELSSKLIVMQNTVTAMKKFEEEWKRLEAEMRAELKILRKEKLMQTAEIEDLKRKSFRSDTEKKEIEGIRVRLEREISALKRHVDALEEEKGKTEKAVRETMNERRAIDKSLASMERENQQLYRNCAQLQAQIQNLERDAGNRSVTKLAKEHSLLEARIAALIEEKRQLQSMLDQKDANYSHKRKLLESQIQLLREQLEAERRKRTKGVVATGPTVSRRGVQHTSAFRHTIERHRSLSQSSERTILQERYLEYVYTGDRTPAIQMINTPPISPLSHSGSFNSDGREARIRRESDNGHLQH.

Coiled coils occupy residues 29–58 (EENR…ESIE), 162–223 (EENL…QQHT), 284–1303 (LMRK…AVES), 1368–1579 (VGVT…EELR), and 1607–1863 (RRWE…RTKG). Disordered regions lie at residues 321-341 (VTEN…DLKR), 391-451 (LTTK…KKLD), 504-551 (LKER…RSLK), 907-935 (EKLN…NEAV), and 961-998 (RDLE…QKTL). Basic and acidic residues-rich tracts occupy residues 326–341 (MKSE…DLKR) and 396–451 (GEID…KKLD). 3 stretches are compositionally biased toward basic and acidic residues: residues 907–931 (EKLN…ESSK), 961–982 (RDLE…KMEL), and 989–998 (EDRKKEQKTL).

Belongs to the rootletin family. In terms of tissue distribution, expressed in head ciliated neurons.

It localises to the cytoplasm. The protein resides in the cytoskeleton. Its subcellular location is the cilium basal body. It is found in the cilium axoneme. Major structural component of the ciliary rootlet, a cytoskeletal-like structure in ciliated cells which originates from the basal body at the proximal end of a cilium and extends proximally toward the cell nucleus. Required for cilia integrity and function in sensory neurons. Maintains cilia integrity, partly by modulating the assembly and transport of intraflagellar proteins along the ciliary axoneme. Required for normal mating behavior and normal responses to environmental and chemical stimuli. This Caenorhabditis elegans protein is Rootletin.